The primary structure comprises 186 residues: ATP synthase subunit b, chloroplastic (186 aa).

The helical transmembrane segment at 27–49 (LATNPINLSVVLGVLIFFGKGVL) threads the bilayer.

This sequence belongs to the ATPase B chain family. As to quaternary structure, F-type ATPases have 2 components, F(1) - the catalytic core - and F(0) - the membrane proton channel. F(1) has five subunits: alpha(3), beta(3), gamma(1), delta(1), epsilon(1). F(0) has four main subunits: a(1), b(1), b'(1) and c(10-14). The alpha and beta chains form an alternating ring which encloses part of the gamma chain. F(1) is attached to F(0) by a central stalk formed by the gamma and epsilon chains, while a peripheral stalk is formed by the delta, b and b' chains.

The protein resides in the plastid. It localises to the chloroplast thylakoid membrane. Its function is as follows. F(1)F(0) ATP synthase produces ATP from ADP in the presence of a proton or sodium gradient. F-type ATPases consist of two structural domains, F(1) containing the extramembraneous catalytic core and F(0) containing the membrane proton channel, linked together by a central stalk and a peripheral stalk. During catalysis, ATP synthesis in the catalytic domain of F(1) is coupled via a rotary mechanism of the central stalk subunits to proton translocation. Functionally, component of the F(0) channel, it forms part of the peripheral stalk, linking F(1) to F(0). The polypeptide is ATP synthase subunit b, chloroplastic (Illicium oligandrum (Star anise)).